The following is a 291-amino-acid chain: Acidic endochitinase (291 aa).

Residues 1–22 form the signal peptide; the sequence is MIKYSFLLTALVLFLRALKLEA. Residues 23–291 enclose the GH18 domain; the sequence is GDIVIYWGQN…GYSSAIKANV (269 aa). Cystine bridges form between C42/C89 and C72/C79. E149 (proton donor) is an active-site residue. Residues C180 and C209 are joined by a disulfide bond.

This sequence belongs to the glycosyl hydrolase 18 family. Chitinase class II subfamily.

It localises to the secreted. It is found in the cell wall. It carries out the reaction Random endo-hydrolysis of N-acetyl-beta-D-glucosaminide (1-&gt;4)-beta-linkages in chitin and chitodextrins.. In terms of biological role, this protein functions as a defense against chitin containing fungal pathogens. This is Acidic endochitinase from Nicotiana tabacum (Common tobacco).